Reading from the N-terminus, the 351-residue chain is Flap endonuclease 1 (351 aa).

Residues 1–98 form an N-domain region; that stretch reads MDLAELVEEI…QELERRKKVK (98 aa). Residues Asp27, Asp80, Glu154, Glu156, Asp175, Asp177, and Asp238 each contribute to the Mg(2+) site. Residues 118 to 260 are I-domain; sequence ELKKYAQMSI…TAYRIIKKYG (143 aa). The interval 343–351 is interaction with PCNA; the sequence is RQTGLDQWF.

Belongs to the XPG/RAD2 endonuclease family. FEN1 subfamily. Interacts with PCNA. PCNA stimulates the nuclease activity without altering cleavage specificity. It depends on Mg(2+) as a cofactor.

Functionally, structure-specific nuclease with 5'-flap endonuclease and 5'-3' exonuclease activities involved in DNA replication and repair. During DNA replication, cleaves the 5'-overhanging flap structure that is generated by displacement synthesis when DNA polymerase encounters the 5'-end of a downstream Okazaki fragment. Binds the unpaired 3'-DNA end and kinks the DNA to facilitate 5' cleavage specificity. Cleaves one nucleotide into the double-stranded DNA from the junction in flap DNA, leaving a nick for ligation. Also involved in the base excision repair (BER) pathway. Acts as a genome stabilization factor that prevents flaps from equilibrating into structures that lead to duplications and deletions. Also possesses 5'-3' exonuclease activity on nicked or gapped double-stranded DNA. In Sulfurisphaera tokodaii (strain DSM 16993 / JCM 10545 / NBRC 100140 / 7) (Sulfolobus tokodaii), this protein is Flap endonuclease 1.